We begin with the raw amino-acid sequence, 440 residues long: Transposon Ty1-ER2 Gag polyprotein (440 aa).

Polar residues-rich tracts occupy residues 1 to 10 (MESQQLSNYP), 48 to 60 (TKAN…TPAS), and 127 to 152 (QSQF…GNTF). 3 disordered regions span residues 1-93 (MESQ…MMTQ), 126-173 (PQSQ…RPPP), and 352-440 (GSRN…PETY). Residues 153–165 (TDSSSADSDMTST) show a composition bias toward low complexity. The segment at 299–401 (NNGIHINNKV…NSKSKTARAH (103 aa)) is RNA-binding. The span at 402–418 (NVSTSNNSPSTDNDSIS) shows a compositional bias: low complexity. Ser-416 is subject to Phosphoserine. The segment covering 419–428 (KSTTEPIQLN) has biased composition (polar residues). The segment covering 429–440 (NKHDLHLRPETY) has biased composition (basic and acidic residues).

As to quaternary structure, homotrimer.

The protein localises to the cytoplasm. Its function is as follows. Capsid protein (CA) is the structural component of the virus-like particle (VLP), forming the shell that encapsulates the retrotransposons dimeric RNA genome. The particles are assembled from trimer-clustered units and there are holes in the capsid shells that allow for the diffusion of macromolecules. CA also has nucleocapsid-like chaperone activity, promoting primer tRNA(i)-Met annealing to the multipartite primer-binding site (PBS), dimerization of Ty1 RNA and initiation of reverse transcription. The chain is Transposon Ty1-ER2 Gag polyprotein (TY1A-ER2) from Saccharomyces cerevisiae (strain ATCC 204508 / S288c) (Baker's yeast).